The primary structure comprises 374 residues: MKYLLPSAAAGLLLLAAQPTMAANTGGYATTDGGDVSGAVKKTARSLQEIVDIIEAAKKDSSGKAVKGGAYPLVITYNGNEDALIKAAEANICGQWSKDPRGVEIKEFTKGITILGTNGSSANFGIWMVNSSNVVVRNMRFGYMPGGAKDGDAIRIDNSPNVWIDHNEIFAKNFECAGTPDNDTTFESAVDIKKGATNVTVSYNYIHGVKKVGLSGSSNTDTGRDLTYHHNIYSDVNSRLPLQRGGKVHAYNNLYDGIKSSGFNVRQKGIALIESNWFENALNPVTARNDDSNFGTWELRNNNITSPSDFAKYKITWGKPSTPHINADDWKSTGKFPAVPYSYSPVSAQCVKDKLASYAGVGKNLAVLTAANCK.

The first 22 residues, 1–22 (MKYLLPSAAAGLLLLAAQPTMA), serve as a signal peptide directing secretion. An intrachain disulfide couples C93 to C176. Positions 150, 152, 187, and 191 each coordinate Ca(2+). The active site involves R239. A disulfide bridge links C350 with C373.

It belongs to the polysaccharide lyase 1 family. PLADES subfamily. Ca(2+) is required as a cofactor.

It localises to the secreted. The enzyme catalyses Eliminative cleavage of (1-&gt;4)-alpha-D-galacturonan to give oligosaccharides with 4-deoxy-alpha-D-galact-4-enuronosyl groups at their non-reducing ends.. It functions in the pathway glycan metabolism; pectin degradation; 2-dehydro-3-deoxy-D-gluconate from pectin: step 2/5. Functionally, involved in maceration and soft-rotting of plant tissue. The protein is Pectate lyase 1 (pel1) of Pectobacterium carotovorum (Erwinia carotovora).